A 76-amino-acid chain; its full sequence is MGAAISQGALIAIVCNGLVGFLLLLLWVILCWACHSRSADVDSLSESSPNSSPGPCPEKAPPPQKPSHEGSYLLQP.

Residues 1–33 form the signal peptide; that stretch reads MGAAISQGALIAIVCNGLVGFLLLLLWVILCWA. The disordered stretch occupies residues 41-76; the sequence is VDSLSESSPNSSPGPCPEKAPPPQKPSHEGSYLLQP. The span at 52 to 65 shows a compositional bias: pro residues; it reads SPGPCPEKAPPPQK.

As to expression, expressed in liver and brain.

The protein resides in the secreted. Functionally, involved in the regulation of glucose homeostasis and lipid metabolism. This Homo sapiens (Human) protein is Adropin (ENHO).